We begin with the raw amino-acid sequence, 208 residues long: uncharacterized protein (208 aa).

The signal sequence occupies residues 1–16 (MTRVALLTTGRELSQA). Disordered stretches follow at residues 1 to 95 (MTRV…VRGQ) and 145 to 176 (RVTKVSSSGPNSTPLPAARIGPGTNNAPSAAD). Residues 16-25 (AAPPARARTP) are compositionally biased toward low complexity. Residues 32–43 (RGERPDDGGHAP) show a composition bias toward basic and acidic residues. Residues 44–54 (HRDRRVNQRRR) are compositionally biased toward basic residues. Residues 55–95 (QVGDRRAQRGVDEHPWRRPDERPNDHLPQRNSERPEGVRGQ) show a composition bias toward basic and acidic residues. Polar residues-rich tracts occupy residues 148-158 (KVSSSGPNSTP) and 167-176 (GTNNAPSAAD).

This is an uncharacterized protein from Mycobacterium tuberculosis (strain CDC 1551 / Oshkosh).